A 440-amino-acid polypeptide reads, in one-letter code: Streptokinase C (440 aa).

The signal sequence occupies residues 1–26 (MKNYLSFGMFALLFALTFGTVNSVQA).

Its function is as follows. This protein is not a protease, but it activates plasminogen by complexing with it. As a potential virulence factor, it is thought to prevent the formation of effective fibrin barriers around the site of infection, thereby contributing to the invasiveness of the cells. The polypeptide is Streptokinase C (skc) (Streptococcus dysgalactiae subsp. equisimilis (Streptococcus equisimilis)).